We begin with the raw amino-acid sequence, 187 residues long: ATP synthase subunit delta, chloroplastic (187 aa).

The protein belongs to the ATPase delta chain family. F-type ATPases have 2 components, F(1) - the catalytic core - and F(0) - the membrane proton channel. F(1) has five subunits: alpha(3), beta(3), gamma(1), delta(1), epsilon(1). CF(0) has four main subunits: a(1), b(1), b'(1) and c(10-14). The alpha and beta chains form an alternating ring which encloses part of the gamma chain. F(1) is attached to F(0) by a central stalk formed by the gamma and epsilon chains, while a peripheral stalk is formed by the delta, b and b' chains.

Its subcellular location is the plastid. The protein localises to the chloroplast thylakoid membrane. In terms of biological role, f(1)F(0) ATP synthase produces ATP from ADP in the presence of a proton or sodium gradient. F-type ATPases consist of two structural domains, F(1) containing the extramembraneous catalytic core and F(0) containing the membrane proton channel, linked together by a central stalk and a peripheral stalk. During catalysis, ATP synthesis in the catalytic domain of F(1) is coupled via a rotary mechanism of the central stalk subunits to proton translocation. Its function is as follows. This protein is part of the stalk that links CF(0) to CF(1). It either transmits conformational changes from CF(0) to CF(1) or is implicated in proton conduction. The chain is ATP synthase subunit delta, chloroplastic from Thalassiosira pseudonana (Marine diatom).